Reading from the N-terminus, the 253-residue chain is Probable proteasome subunit alpha type-7 (253 aa).

Serine 104 bears the Phosphoserine mark.

The protein belongs to the peptidase T1A family. The 26S proteasome consists of a 20S proteasome core and two 19S regulatory subunits. The 20S proteasome core is composed of 28 subunits that are arranged in four stacked rings, resulting in a barrel-shaped structure. The two end rings are each formed by seven alpha subunits, and the two central rings are each formed by seven beta subunits. The catalytic chamber with the active sites is on the inside of the barrel.

The protein localises to the cytoplasm. It is found in the nucleus. Its function is as follows. The proteasome is a multicatalytic proteinase complex which is characterized by its ability to cleave peptides with Arg, Phe, Tyr, Leu, and Glu adjacent to the leaving group at neutral or slightly basic pH. The proteasome has an ATP-dependent proteolytic activity. This chain is Probable proteasome subunit alpha type-7 (pre10), found in Schizosaccharomyces pombe (strain 972 / ATCC 24843) (Fission yeast).